The primary structure comprises 242 residues: 1-(5-phosphoribosyl)-5-[(5-phosphoribosylamino)methylideneamino] imidazole-4-carboxamide isomerase (242 aa).

Residue Asp8 is the Proton acceptor of the active site. Asp130 serves as the catalytic Proton donor.

The protein belongs to the HisA/HisF family.

The protein localises to the cytoplasm. The catalysed reaction is 1-(5-phospho-beta-D-ribosyl)-5-[(5-phospho-beta-D-ribosylamino)methylideneamino]imidazole-4-carboxamide = 5-[(5-phospho-1-deoxy-D-ribulos-1-ylimino)methylamino]-1-(5-phospho-beta-D-ribosyl)imidazole-4-carboxamide. The protein operates within amino-acid biosynthesis; L-histidine biosynthesis; L-histidine from 5-phospho-alpha-D-ribose 1-diphosphate: step 4/9. The sequence is that of 1-(5-phosphoribosyl)-5-[(5-phosphoribosylamino)methylideneamino] imidazole-4-carboxamide isomerase from Acidithiobacillus ferrooxidans (strain ATCC 53993 / BNL-5-31) (Leptospirillum ferrooxidans (ATCC 53993)).